The sequence spans 135 residues: Flagellar assembly factor FliW 1 (135 aa).

This sequence belongs to the FliW family. As to quaternary structure, interacts with translational regulator CsrA and flagellin(s).

The protein localises to the cytoplasm. In terms of biological role, acts as an anti-CsrA protein, binds CsrA and prevents it from repressing translation of its target genes, one of which is flagellin. Binds to flagellin and participates in the assembly of the flagellum. This is Flagellar assembly factor FliW 1 from Helicobacter pylori (strain HPAG1).